Reading from the N-terminus, the 269-residue chain is Tryptophan synthase alpha chain (269 aa).

Residues Glu-49 and Asp-60 each act as proton acceptor in the active site.

It belongs to the TrpA family. As to quaternary structure, tetramer of two alpha and two beta chains.

The enzyme catalyses (1S,2R)-1-C-(indol-3-yl)glycerol 3-phosphate + L-serine = D-glyceraldehyde 3-phosphate + L-tryptophan + H2O. It participates in amino-acid biosynthesis; L-tryptophan biosynthesis; L-tryptophan from chorismate: step 5/5. In terms of biological role, the alpha subunit is responsible for the aldol cleavage of indoleglycerol phosphate to indole and glyceraldehyde 3-phosphate. This is Tryptophan synthase alpha chain from Buchnera aphidicola subsp. Acyrthosiphon pisum (strain APS) (Acyrthosiphon pisum symbiotic bacterium).